The sequence spans 173 residues: Trafficking regulator of GLUT4 1 (173 aa).

A compositionally biased stretch (polar residues) spans 1-17 (MANPVQPQLQDPGSTSP). Residues 1-22 (MANPVQPQLQDPGSTSPLDLPE) form a disordered region. Residues 1 to 102 (MANPVQPQLQ…QDQEAPKDYL (102 aa)) are Cytoplasmic-facing. Phosphoserine occurs at positions 16, 43, 45, 70, 84, and 85. The segment at residues 103-123 (VLAIASCFCPVWPLNLIPLIF) is an intramembrane region (helical). The Cytoplasmic segment spans residues 124–150 (SIMSRSSVQQGDLDGARRLGRLARLLS). Residues 151 to 171 (ITFIILGIVIIIVAVTVNFTV) traverse the membrane as a helical segment. At 172–173 (PK) the chain is on the extracellular side.

The protein belongs to the CD225/Dispanin family. Interacts with SLC2A4; the interaction is required for proper SLC2A4 reacycling after insulin stimulation. In terms of tissue distribution, present in adipose tissue and undetectable in other tissues (at protein level).

The protein localises to the cell membrane. It localises to the endomembrane system. It is found in the cytoplasm. Its subcellular location is the perinuclear region. Regulates insulin-mediated adipose tissue glucose uptake and transport by modulation of SLC2A4 recycling. Not required for SLC2A4 membrane fusion upon an initial stimulus, but rather is necessary for proper protein recycling during prolonged insulin stimulation. In Rattus norvegicus (Rat), this protein is Trafficking regulator of GLUT4 1.